A 105-amino-acid chain; its full sequence is uncharacterized protein (105 aa).

The span at 1-11 (MPHRNDRRKSA) shows a compositional bias: basic residues. Residues 1 to 20 (MPHRNDRRKSASKAPNAIIH) are disordered.

It belongs to the ALB1 family.

It localises to the nucleus. Its subcellular location is the nucleolus. This is an uncharacterized protein from Schizosaccharomyces pombe (strain 972 / ATCC 24843) (Fission yeast).